We begin with the raw amino-acid sequence, 285 residues long: Polyamine aminopropyltransferase (285 aa).

Positions 5-241 (DTWFTEHFQT…GWWSVTLSSK (237 aa)) constitute a PABS domain. Gln-35 provides a ligand contact to S-methyl-5'-thioadenosine. Spermidine-binding residues include His-66 and Asp-90. Residues Asp-110 and 141–142 (DG) contribute to the S-methyl-5'-thioadenosine site. Catalysis depends on Asp-160, which acts as the Proton acceptor. 160–163 (DSTD) is a spermidine binding site. Pro-167 lines the S-methyl-5'-thioadenosine pocket.

The protein belongs to the spermidine/spermine synthase family. Homodimer or homotetramer.

The protein localises to the cytoplasm. It catalyses the reaction S-adenosyl 3-(methylsulfanyl)propylamine + putrescine = S-methyl-5'-thioadenosine + spermidine + H(+). The protein operates within amine and polyamine biosynthesis; spermidine biosynthesis; spermidine from putrescine: step 1/1. Catalyzes the irreversible transfer of a propylamine group from the amino donor S-adenosylmethioninamine (decarboxy-AdoMet) to putrescine (1,4-diaminobutane) to yield spermidine. In Xylella fastidiosa (strain Temecula1 / ATCC 700964), this protein is Polyamine aminopropyltransferase.